Consider the following 486-residue polypeptide: NADH-quinone oxidoreductase subunit N (486 aa).

The next 14 helical transmembrane spans lie at 8-28 (LIALLPFLILLLTVVIVILSI), 36-56 (FIAFLTIISLIVSLCSLYFLI), 74-94 (ILYISMIIISSIATCVFAYPW), 104-124 (EFYLLTLISTLGAIFLTISNH), 125-145 (MASLFISVELMSLPIFGLIAY), 160-180 (LVLSGVSSSFLLLGISWIYAI), 204-224 (VLFGIIMVLMSFFFKLSMVPF), 239-259 (VLSFFSVSGKIAIFSILLYFF), 270-290 (IFLILSLISFFSILFGNLMAI), 298-318 (FFGYSSISQIGYLLIILLVSK), 329-349 (GIFLLNYLCTNIVYFGVINLF), 374-394 (ASIVTIVLLSLGGIPITLGFF), 407-427 (HLWTIGASFLIGTILGLYGYL), and 459-479 (ILIFISGIMLLILGIYPNPLI).

The protein belongs to the complex I subunit 2 family. In terms of assembly, NDH-1 is composed of 13 different subunits. Subunits NuoA, H, J, K, L, M, N constitute the membrane sector of the complex.

It is found in the cell membrane. It carries out the reaction a quinone + NADH + 5 H(+)(in) = a quinol + NAD(+) + 4 H(+)(out). NDH-1 shuttles electrons from NADH, via FMN and iron-sulfur (Fe-S) centers, to quinones in the respiratory chain. The immediate electron acceptor for the enzyme in this species is believed to be ubiquinone. Couples the redox reaction to proton translocation (for every two electrons transferred, four hydrogen ions are translocated across the cytoplasmic membrane), and thus conserves the redox energy in a proton gradient. The polypeptide is NADH-quinone oxidoreductase subunit N (Buchnera aphidicola subsp. Schizaphis graminum (strain Sg)).